The primary structure comprises 504 residues: ATP synthase subunit beta (504 aa).

Position 181 to 188 (181 to 188) interacts with ATP; the sequence is GGAGVGKT.

It belongs to the ATPase alpha/beta chains family. F-type ATPases have 2 components, CF(1) - the catalytic core - and CF(0) - the membrane proton channel. CF(1) has five subunits: alpha(3), beta(3), gamma(1), delta(1), epsilon(1). CF(0) has three main subunits: a(1), b(2) and c(9-12). The alpha and beta chains form an alternating ring which encloses part of the gamma chain. CF(1) is attached to CF(0) by a central stalk formed by the gamma and epsilon chains, while a peripheral stalk is formed by the delta and b chains.

The protein localises to the cell inner membrane. It catalyses the reaction ATP + H2O + 4 H(+)(in) = ADP + phosphate + 5 H(+)(out). Produces ATP from ADP in the presence of a proton gradient across the membrane. The catalytic sites are hosted primarily by the beta subunits. This chain is ATP synthase subunit beta, found in Ehrlichia ruminantium (strain Welgevonden).